The following is a 463-amino-acid chain: Fumarate hydratase class II (463 aa).

Residues 98–100 (SGT), 129–132 (HPND), 139–141 (SSN), and Thr-187 contribute to the substrate site. The active-site Proton donor/acceptor is the His-188. Ser-318 is a catalytic residue. Residues Ser-319 and 324 to 326 (KVN) contribute to the substrate site.

The protein belongs to the class-II fumarase/aspartase family. Fumarase subfamily. In terms of assembly, homotetramer.

Its subcellular location is the cytoplasm. The enzyme catalyses (S)-malate = fumarate + H2O. It functions in the pathway carbohydrate metabolism; tricarboxylic acid cycle; (S)-malate from fumarate: step 1/1. In terms of biological role, involved in the TCA cycle. Catalyzes the stereospecific interconversion of fumarate to L-malate. This Rickettsia bellii (strain RML369-C) protein is Fumarate hydratase class II.